We begin with the raw amino-acid sequence, 491 residues long: Katanin p60 ATPase-containing subunit A1 (491 aa).

The segment at 1–29 (MSLLMISENVKLAREYALLGNYDSAMVYY) is interaction with KATNB1. Positions 1–75 (MSLLMISENV…VKDIMKTLES (75 aa)) are interaction with dynein and NDEL1. The tract at residues 1 to 185 (MSLLMISENV…EPETNKFDST (185 aa)) is interaction with microtubules. Phosphoserine; by DYRK2 occurs at positions 42 and 109. Residues 87–185 (QHDLPASEGE…EPETNKFDST (99 aa)) are disordered. The residue at position 133 (Thr133) is a Phosphothreonine; by DYRK2. Over residues 145–169 (HNDRGKAVRCREKKEQNKGREEKNK) the composition is skewed to basic and acidic residues. Ser170 carries the phosphoserine modification. Residue 249–256 (GPPGTGKT) participates in ATP binding.

The protein belongs to the AAA ATPase family. Katanin p60 subunit A1 subfamily. As to quaternary structure, can homooligomerize into hexameric rings, which may be promoted by interaction with microtubules. Interacts with KATNB1, which may serve as a targeting subunit. Interacts with ASPM; the katanin complex formation KATNA1:KATNB1 is required for the association of ASPM Interacts with dynein and NDEL1. Associates with the E3 ligase complex containing DYRK2, EDD/UBR5, DDB1 and DCAF1 proteins (EDVP complex). Interacts with KLHL42 (via the kelch domains). Interacts with CUL3; the interaction is enhanced by KLHL42. Interacts with KATNB1 and KATNBL1. Interacts with CAMSAP2 and CAMSAP3; leading to regulate the length of CAMSAP-decorated microtubule stretches. Post-translationally, phosphorylation by DYRK2 triggers ubiquitination and subsequent degradation. Ubiquitinated by the BCR(KLHL42) E3 ubiquitin ligase complex, leading to its proteasomal degradation. Ubiquitinated by the EDVP E3 ligase complex and subsequently targeted for proteasomal degradation.

It localises to the cytoplasm. Its subcellular location is the midbody. The protein localises to the cytoskeleton. The protein resides in the microtubule organizing center. It is found in the centrosome. It localises to the spindle pole. Its subcellular location is the spindle. The enzyme catalyses n ATP + n H2O + a microtubule = n ADP + n phosphate + (n+1) alpha/beta tubulin heterodimers.. Its activity is regulated as follows. ATPase activity is stimulated by microtubules, which promote homooligomerization. ATP-dependent microtubule severing is stimulated by interaction with KATNB1. Catalytic subunit of a complex which severs microtubules in an ATP-dependent manner. Microtubule severing may promote rapid reorganization of cellular microtubule arrays and the release of microtubules from the centrosome following nucleation. Microtubule release from the mitotic spindle poles may allow depolymerization of the microtubule end proximal to the spindle pole, leading to poleward microtubule flux and poleward motion of chromosome. Microtubule release within the cell body of neurons may be required for their transport into neuronal processes by microtubule-dependent motor proteins. This transport is required for axonal growth. This Macaca fascicularis (Crab-eating macaque) protein is Katanin p60 ATPase-containing subunit A1.